The primary structure comprises 97 residues: Putative septation protein SpoVG (97 aa).

The protein belongs to the SpoVG family.

Could be involved in septation. This Borreliella afzelii (strain PKo) (Borrelia afzelii) protein is Putative septation protein SpoVG.